Here is a 68-residue protein sequence, read N- to C-terminus: Large ribosomal subunit protein uL29 (68 aa).

Belongs to the universal ribosomal protein uL29 family.

The sequence is that of Large ribosomal subunit protein uL29 from Limosilactobacillus reuteri (strain DSM 20016) (Lactobacillus reuteri).